We begin with the raw amino-acid sequence, 533 residues long: Acid-sensing ion channel 2 (533 aa).

Residues M1–E16 are compositionally biased toward basic and acidic residues. Residues M1–L23 form a disordered region. The Cytoplasmic segment spans residues M1–A68. Residues A69–L89 form a helical membrane-spanning segment. Residues S90 to E445 are Extracellular-facing. 6 cysteine pairs are disulfide-bonded: C113–C214, C310–C385, C328–C381, C332–C379, C341–C363, and C343–C355. An N-linked (GlcNAc...) asparagine glycan is attached at N163. N-linked (GlcNAc...) asparagine glycosylation is found at N386 and N413. Residues V446–L466 form a helical membrane-spanning segment. Positions G462–S464 match the GAS motif; ion selectivity filter motif. Residues T467 to C533 are Cytoplasmic-facing.

It belongs to the amiloride-sensitive sodium channel (TC 1.A.6) family. ASIC2 subfamily. Can form homotrimers; probably non-functional. Heterotrimer; could form functional heterotrimers producing channel with specific properties depending on their composition. In terms of tissue distribution, expressed in central nervous system.

The protein resides in the cell membrane. The enzyme catalyses Na(+)(in) = Na(+)(out). Inhibited by the diuretic drug amiloride. Its function is as follows. Could form pH-gated heterotrimeric sodium channels that act as postsynaptic excitatory sensors in the nervous system, generating rapid, transient inward currents that fully desensitize upon extracellular acidification. This chain is Acid-sensing ion channel 2 (asic2), found in Danio rerio (Zebrafish).